We begin with the raw amino-acid sequence, 181 residues long: Crossover junction endodeoxyribonuclease RuvC (181 aa).

Residues D7, E67, and D139 contribute to the active site. D7, E67, and D139 together coordinate Mg(2+).

The protein belongs to the RuvC family. As to quaternary structure, homodimer which binds Holliday junction (HJ) DNA. The HJ becomes 2-fold symmetrical on binding to RuvC with unstacked arms; it has a different conformation from HJ DNA in complex with RuvA. In the full resolvosome a probable DNA-RuvA(4)-RuvB(12)-RuvC(2) complex forms which resolves the HJ. Mg(2+) is required as a cofactor.

It localises to the cytoplasm. The catalysed reaction is Endonucleolytic cleavage at a junction such as a reciprocal single-stranded crossover between two homologous DNA duplexes (Holliday junction).. Functionally, the RuvA-RuvB-RuvC complex processes Holliday junction (HJ) DNA during genetic recombination and DNA repair. Endonuclease that resolves HJ intermediates. Cleaves cruciform DNA by making single-stranded nicks across the HJ at symmetrical positions within the homologous arms, yielding a 5'-phosphate and a 3'-hydroxyl group; requires a central core of homology in the junction. The consensus cleavage sequence is 5'-(A/T)TT(C/G)-3'. Cleavage occurs on the 3'-side of the TT dinucleotide at the point of strand exchange. HJ branch migration catalyzed by RuvA-RuvB allows RuvC to scan DNA until it finds its consensus sequence, where it cleaves and resolves the cruciform DNA. This is Crossover junction endodeoxyribonuclease RuvC from Cupriavidus metallidurans (strain ATCC 43123 / DSM 2839 / NBRC 102507 / CH34) (Ralstonia metallidurans).